A 489-amino-acid polypeptide reads, in one-letter code: Corticosteroid-binding protein (489 aa).

This sequence to yeast FMS1.

Its function is as follows. May be a flavoprotein with enzymatic activity. The sequence is that of Corticosteroid-binding protein (CBP1) from Candida albicans (strain SC5314 / ATCC MYA-2876) (Yeast).